A 32-amino-acid polypeptide reads, in one-letter code: Hemocyanin C chain (32 aa).

Belongs to the tyrosinase family. Hemocyanin subfamily. In terms of tissue distribution, hemolymph.

Its subcellular location is the secreted. It localises to the extracellular space. Its function is as follows. Hemocyanins are copper-containing oxygen carriers occurring freely dissolved in the hemolymph of many mollusks and arthropods. The protein is Hemocyanin C chain of Cherax destructor (Common yabby crayfish).